A 297-amino-acid polypeptide reads, in one-letter code: Probable lipid kinase YegS-like (297 aa).

Residues 2–131 form the DAGKc domain; sequence STFPASLLIL…IDIARVNDKT (130 aa). ATP contacts are provided by residues Thr40, 66-72, and Thr93; that span reads GDGTINE. Positions 213, 216, and 218 each coordinate Mg(2+). The active-site Proton acceptor is Glu269.

It belongs to the diacylglycerol/lipid kinase family. YegS lipid kinase subfamily. It depends on Mg(2+) as a cofactor. The cofactor is Ca(2+).

The protein localises to the cytoplasm. Functionally, probably phosphorylates lipids; the in vivo substrate is unknown. The sequence is that of Probable lipid kinase YegS-like from Klebsiella pneumoniae (strain 342).